A 161-amino-acid chain; its full sequence is Nascent polypeptide-associated complex subunit beta (161 aa).

2 disordered regions span residues 14–41 (LSANNKVGGTRRKLAKKSGTASANKDDS) and 125–161 (QNAQAAAPATEGHEAGEKKDNDIPELIEGQSFDADVE). Residues 37-102 (NKDDSKLQAQ…PQEKSLQDLF (66 aa)) enclose the NAC-A/B domain. Residues 125–134 (QNAQAAAPAT) are compositionally biased toward low complexity. A compositionally biased stretch (basic and acidic residues) spans 135–146 (EGHEAGEKKDND).

This sequence belongs to the NAC-beta family. Part of the nascent polypeptide-associated complex (NAC), consisting of EGD2 and EGD1. NAC associates with ribosomes via EGD1.

It localises to the cytoplasm. The protein localises to the nucleus. Its function is as follows. Component of the nascent polypeptide-associated complex (NAC), a dynamic component of the ribosomal exit tunnel, protecting the emerging polypeptides from interaction with other cytoplasmic proteins to ensure appropriate nascent protein targeting. The NAC complex also promotes mitochondrial protein import by enhancing productive ribosome interactions with the outer mitochondrial membrane and blocks the inappropriate interaction of ribosomes translating non-secretory nascent polypeptides with translocation sites in the membrane of the endoplasmic reticulum. EGD1 may act as a transcription factor that exert a negative effect on the expression of several genes that are transcribed by RNA polymerase II. This is Nascent polypeptide-associated complex subunit beta (EGD1) from Eremothecium gossypii (strain ATCC 10895 / CBS 109.51 / FGSC 9923 / NRRL Y-1056) (Yeast).